Here is a 480-residue protein sequence, read N- to C-terminus: Chromosomal replication initiator protein DnaA (480 aa).

Residues 1–71 (MNLTKVWNTT…REQLGSVVGF (71 aa)) form a domain I, interacts with DnaA modulators region. A domain II region spans residues 71–139 (FPVDVRIVLA…LELHRAVRSS (69 aa)). The tract at residues 91-115 (SINGRHAARDTRKSDHHAPLSGGYG) is disordered. Positions 97 to 108 (AARDTRKSDHHA) are enriched in basic and acidic residues. A domain III, AAA+ region region spans residues 140–356 (MLNPRYTFDR…GCLNRVTAYA (217 aa)). Residues Gly184, Gly186, Lys187, and Thr188 each contribute to the ATP site. The interval 357-480 (QMYNIPVTIE…IRERLMNSAV (124 aa)) is domain IV, binds dsDNA.

Belongs to the DnaA family. As to quaternary structure, oligomerizes as a right-handed, spiral filament on DNA at oriC.

The protein resides in the cytoplasm. Its function is as follows. Plays an essential role in the initiation and regulation of chromosomal replication. ATP-DnaA binds to the origin of replication (oriC) to initiate formation of the DNA replication initiation complex once per cell cycle. Binds the DnaA box (a 9 base pair repeat at the origin) and separates the double-stranded (ds)DNA. Forms a right-handed helical filament on oriC DNA; dsDNA binds to the exterior of the filament while single-stranded (ss)DNA is stabiized in the filament's interior. The ATP-DnaA-oriC complex binds and stabilizes one strand of the AT-rich DNA unwinding element (DUE), permitting loading of DNA polymerase. After initiation quickly degrades to an ADP-DnaA complex that is not apt for DNA replication. Binds acidic phospholipids. This chain is Chromosomal replication initiator protein DnaA, found in Roseiflexus castenholzii (strain DSM 13941 / HLO8).